A 452-amino-acid polypeptide reads, in one-letter code: 5'-nucleotidase domain-containing protein 1 (452 aa).

Asp-16 (nucleophile) is an active-site residue. Asp-16 and Asp-18 together coordinate Mg(2+). The active-site Proton donor is Asp-18. Lys-171 carries the post-translational modification N6-acetyllysine. Asp-313 is a binding site for Mg(2+). A compositionally biased stretch (basic and acidic residues) spans 339–361 (GDKDGKPEESEPEEKKGKYEGSK). The disordered stretch occupies residues 339 to 365 (GDKDGKPEESEPEEKKGKYEGSKAKPL).

The protein belongs to the 5'(3')-deoxyribonucleotidase family.

The sequence is that of 5'-nucleotidase domain-containing protein 1 (NT5DC1) from Bos taurus (Bovine).